The following is a 319-amino-acid chain: rRNA adenine N-6-methyltransferase (319 aa).

The tract at residues 1 to 59 (MARAPRSPHPARSRETSRAHPPYGTRADRAPGRGRDRDRSPDSPGNTSSRDGGRSPDRA) is disordered. Basic and acidic residues predominate over residues 26 to 41 (RADRAPGRGRDRDRSP). 6 residues coordinate S-adenosyl-L-methionine: Asn66, Leu68, Gly93, Glu114, Asp141, and Asn157.

Belongs to the class I-like SAM-binding methyltransferase superfamily. rRNA adenine N(6)-methyltransferase family.

The catalysed reaction is adenosine(2085) in 23S rRNA + 2 S-adenosyl-L-methionine = N(6)-dimethyladenosine(2085) in 23S rRNA + 2 S-adenosyl-L-homocysteine + 2 H(+). In terms of biological role, this protein produces a dimethylation of the adenine residue at position 2085 in 23S rRNA, resulting in reduced affinity between ribosomes and macrolide-lincosamide-streptogramin B antibiotics. This Streptomyces fradiae (Streptomyces roseoflavus) protein is rRNA adenine N-6-methyltransferase (ermSF).